A 395-amino-acid polypeptide reads, in one-letter code: Altered inheritance of mitochondria protein 39, mitochondrial (395 aa).

A helical transmembrane segment spans residues 161–181; that stretch reads IFGGIFGVIIGYSLIYKVIYL.

It belongs to the AIM39 family.

It localises to the mitochondrion membrane. The polypeptide is Altered inheritance of mitochondria protein 39, mitochondrial (AIM39) (Saccharomyces cerevisiae (strain YJM789) (Baker's yeast)).